The following is a 412-amino-acid chain: Proline-rich protein 30 (412 aa).

The segment covering 33-45 has biased composition (polar residues); the sequence is HNLQPLSAHQSLR. Disordered regions lie at residues 33 to 75, 123 to 174, and 318 to 412; these read HNLQ…QFGS, PLTP…SNRQ, and PKEV…KSSV. 2 stretches are compositionally biased toward low complexity: residues 126–142 and 334–350; these read PSFS…PHSP and PSPA…ADPA. Over residues 353 to 372 the composition is skewed to polar residues; it reads TPSQTRSFRSAGLQSPNSPR.

The protein is Proline-rich protein 30 (PRR30) of Macaca fascicularis (Crab-eating macaque).